Consider the following 225-residue polypeptide: Non-structural protein V (225 aa).

The segment covering 145 to 157 has biased composition (polar residues); it reads SGPSLTDQASSKD. The interval 145–172 is disordered; the sequence is SGPSLTDQASSKDPNFKRGGEIDGRHKG. Positions 158–169 are enriched in basic and acidic residues; the sequence is PNFKRGGEIDGR. Residues His-174, Cys-193, Cys-197, Cys-209, Cys-211, Cys-214, Cys-218, and Cys-221 each coordinate Zn(2+).

It belongs to the paramyxoviruses V protein family.

It is found in the host cytoplasm. Its function is as follows. Plays an essential role in the inhibition of host immune response. Prevents the establishment of cellular antiviral state by blocking interferon-alpha/beta (IFN-alpha/beta) production and signaling pathway. Interacts with host IFIH1/MDA5 and DHX58/LGP2 to inhibit the transduction pathway involved in the activation of IFN-beta promoter, thus protecting the virus against cell antiviral state. Efficiently blocks type I and type II IFN signaling following infection, probably by targeting host STAT1 for proteasomal degradation. This Simian virus 41 (SV41) protein is Non-structural protein V (P/V).